Here is a 737-residue protein sequence, read N- to C-terminus: Catalase-peroxidase (737 aa).

An N-terminal signal peptide occupies residues 1-23; it reads MLKKILPVLITLAIVHNTPTAWA. The segment at residues 102–223 is a cross-link (tryptophyl-tyrosyl-methioninium (Trp-Tyr) (with M-249)); sequence WHGAGTYRIY…LAATQMGLIY (122 aa). Histidine 103 functions as the Proton acceptor in the catalytic mechanism. A cross-link (tryptophyl-tyrosyl-methioninium (Tyr-Met) (with W-102)) is located at residues 223 to 249; it reads YVNPEGPNGKPDPVAAAKDIREAFARM. A heme b-binding site is contributed by histidine 264.

This sequence belongs to the peroxidase family. Peroxidase/catalase subfamily. As to quaternary structure, homodimer or homotetramer. Requires heme b as cofactor. Formation of the three residue Trp-Tyr-Met cross-link is important for the catalase, but not the peroxidase activity of the enzyme.

It catalyses the reaction H2O2 + AH2 = A + 2 H2O. It carries out the reaction 2 H2O2 = O2 + 2 H2O. Functionally, bifunctional enzyme with both catalase and broad-spectrum peroxidase activity. The protein is Catalase-peroxidase of Yersinia pseudotuberculosis serotype I (strain IP32953).